The sequence spans 183 residues: Ribosome maturation factor RimP (183 aa).

The protein belongs to the RimP family.

Its subcellular location is the cytoplasm. Functionally, required for maturation of 30S ribosomal subunits. This chain is Ribosome maturation factor RimP, found in Mycobacterium bovis (strain ATCC BAA-935 / AF2122/97).